The primary structure comprises 378 residues: Ribosomal RNA large subunit methyltransferase G (378 aa).

It belongs to the methyltransferase superfamily. RlmG family.

It is found in the cytoplasm. The catalysed reaction is guanosine(1835) in 23S rRNA + S-adenosyl-L-methionine = N(2)-methylguanosine(1835) in 23S rRNA + S-adenosyl-L-homocysteine + H(+). In terms of biological role, specifically methylates the guanine in position 1835 (m2G1835) of 23S rRNA. This is Ribosomal RNA large subunit methyltransferase G from Shigella dysenteriae serotype 1 (strain Sd197).